We begin with the raw amino-acid sequence, 147 residues long: Cyanate hydratase (147 aa).

Residues R88, E91, and S114 contribute to the active site.

It belongs to the cyanase family.

It catalyses the reaction cyanate + hydrogencarbonate + 3 H(+) = NH4(+) + 2 CO2. Its function is as follows. Catalyzes the reaction of cyanate with bicarbonate to produce ammonia and carbon dioxide. The chain is Cyanate hydratase from Acaryochloris marina (strain MBIC 11017).